A 268-amino-acid chain; its full sequence is Non-homologous end joining protein Ku (268 aa).

The Ku domain occupies 13–175 (VSLVTCPVTM…TLHDGNAVRN (163 aa)). The segment at 174–194 (RNGGHPAARTRPASEAESADS) is disordered.

It belongs to the prokaryotic Ku family. As to quaternary structure, homodimer. Interacts with LigD.

Its function is as follows. With LigD forms a non-homologous end joining (NHEJ) DNA repair enzyme, which repairs dsDNA breaks with reduced fidelity. Binds linear dsDNA with 5'- and 3'- overhangs but not closed circular dsDNA nor ssDNA. Recruits and stimulates the ligase activity of LigD. The polypeptide is Non-homologous end joining protein Ku (Gluconacetobacter diazotrophicus (strain ATCC 49037 / DSM 5601 / CCUG 37298 / CIP 103539 / LMG 7603 / PAl5)).